Here is a 40-residue protein sequence, read N- to C-terminus: Esterase-4 (40 aa).

It belongs to the type-B carboxylesterase/lipase family.

The enzyme catalyses a carboxylic ester + H2O = an alcohol + a carboxylate + H(+). The chain is Esterase-4 (Est-4) from Drosophila mojavensis (Fruit fly).